A 102-amino-acid polypeptide reads, in one-letter code: uncharacterized protein (102 aa).

This is an uncharacterized protein from Homo sapiens (Human).